Here is a 347-residue protein sequence, read N- to C-terminus: NAD-dependent alcohol dehydrogenase (347 aa).

At Lys11 the chain carries N6-methyllysine; partial. 7 residues coordinate Zn(2+): Cys38, His68, Glu98, Cys101, Cys104, Cys112, and Cys154. N6-methyllysine; partial is present on Lys213.

The protein belongs to the zinc-containing alcohol dehydrogenase family. Homodimer and homotetramer. Requires Zn(2+) as cofactor.

The catalysed reaction is a primary alcohol + NAD(+) = an aldehyde + NADH + H(+). It carries out the reaction a secondary alcohol + NAD(+) = a ketone + NADH + H(+). The sequence is that of NAD-dependent alcohol dehydrogenase (adh) from Saccharolobus solfataricus (strain ATCC 35092 / DSM 1617 / JCM 11322 / P2) (Sulfolobus solfataricus).